The following is a 309-amino-acid chain: Elongation factor Ts (309 aa).

Residues 82 to 85 (TDFV) are involved in Mg(2+) ion dislocation from EF-Tu.

This sequence belongs to the EF-Ts family.

Its subcellular location is the cytoplasm. Functionally, associates with the EF-Tu.GDP complex and induces the exchange of GDP to GTP. It remains bound to the aminoacyl-tRNA.EF-Tu.GTP complex up to the GTP hydrolysis stage on the ribosome. In Rickettsia africae (strain ESF-5), this protein is Elongation factor Ts.